Consider the following 766-residue polypeptide: MNNSLQSSKLVLLLAIALVLFLNTELDFLTAAGALDSDSKVYIVYLGEREHDDPELVTASHHQMLESLLQSKEDAQNSLIYSYQHGFSGFAALLTSSQAKKISEHPEVIHVIPNRIRKLKTTRAWDHLGLSPIPTSFSSLSSVKGLLHDTNLGSEAIIGVIDSGIWPESKAVNDQGLGPIPKRWRGKCEPGEQFNATIHCNNKLIGARYYLNGVVAAIGGKFNRTIIQDFQSTRDANGHGTHTATIAGGSFVPNVSYFGLAQGLVRGGAPRARIASYKACWNVMRDEGGGTDGRCTSADMWKAFDDAIHDGVDVLSVSIGGGIPEDSEVDKLDYIAAFHAVAKGITVVAAAGNEGPGAHTVDNVAPWLLTVAATTLDRSFPTKITLGNNQTLFAESLFTGPEISTGLAFLDSDSDDTVDVKGKTVLVFDSATPIAGKGVAAVILAQKPDDLLSRCNGVPCIFPDYEFGTEILKYIRTTRSPTVRITAATTLTGQPATTKVAAFSCRGPNSVSPAILKPDIAAPGVSILAAISPLNPEEQNGFGLLSGTSMSTPVVSGIIALLKSLHPKWSPAAVRSALVTTAWRTSPSGEPIFAEGSNKKLADPFDYGGGLVNPEKAAKPGLVYDMGIVDYIKYMCSAGYNDSSISRVLGKKTNCPIPKPSMLDINLPSITIPNLEKEVTLTRTVTNVGPIKSVYRAVIESPLGITLTVNPTTLVFKSAAKRVLTFSVKAKTSHKVNTGYFFGSLTWSDGVHDVIIPVSVKTTISM.

An N-terminal signal peptide occupies residues Met-1–Phe-21. A propeptide spans Leu-22–Lys-120 (activation peptide). Residues Val-41 to Leu-119 enclose the Inhibitor I9 domain. The region spanning Pro-134–Ala-618 is the Peptidase S8 domain. Asp-162 serves as the catalytic Charge relay system. N-linked (GlcNAc...) asparagine glycosylation is found at Asn-195 and Asn-223. The Charge relay system role is filled by His-239. Residues Asn-254 and Asn-389 are each glycosylated (N-linked (GlcNAc...) asparagine). Catalysis depends on Ser-549, which acts as the Charge relay system. Residue Asn-641 is glycosylated (N-linked (GlcNAc...) asparagine).

Belongs to the peptidase S8 family.

It localises to the secreted. The polypeptide is Subtilisin-like protease SBT3.13 (Arabidopsis thaliana (Mouse-ear cress)).